The chain runs to 233 residues: Small ribosomal subunit protein uS2 (233 aa).

Belongs to the universal ribosomal protein uS2 family.

The protein is Small ribosomal subunit protein uS2 of Clostridium acetobutylicum (strain ATCC 824 / DSM 792 / JCM 1419 / IAM 19013 / LMG 5710 / NBRC 13948 / NRRL B-527 / VKM B-1787 / 2291 / W).